We begin with the raw amino-acid sequence, 191 residues long: Putative glutathione-dependent formaldehyde-activating enzyme (191 aa).

Residues Phe-20 to Asp-166 enclose the CENP-V/GFA domain. Zn(2+) contacts are provided by Cys-27, Cys-29, Cys-48, Cys-50, Cys-53, Cys-95, and Cys-98.

Belongs to the Gfa family. The cofactor is Zn(2+).

It carries out the reaction S-(hydroxymethyl)glutathione = glutathione + formaldehyde. It participates in one-carbon metabolism; formaldehyde degradation; formate from formaldehyde (glutathione route): step 1/3. In terms of biological role, catalyzes the condensation of formaldehyde and glutathione to S-hydroxymethylglutathione. The sequence is that of Putative glutathione-dependent formaldehyde-activating enzyme from Penicillium rubens (strain ATCC 28089 / DSM 1075 / NRRL 1951 / Wisconsin 54-1255) (Penicillium chrysogenum).